The primary structure comprises 294 residues: Small ribosomal subunit biogenesis GTPase RsgA (294 aa).

A CP-type G domain is found at 63 to 223 (KNELLRPPIA…VADTPGFSSL (161 aa)). GTP contacts are provided by residues 112–115 (SKID) and 166–174 (GQSGVGKSS). Zn(2+) contacts are provided by Cys247, Cys252, His254, and Cys260.

It belongs to the TRAFAC class YlqF/YawG GTPase family. RsgA subfamily. Monomer. Associates with 30S ribosomal subunit, binds 16S rRNA. The cofactor is Zn(2+).

The protein localises to the cytoplasm. One of several proteins that assist in the late maturation steps of the functional core of the 30S ribosomal subunit. Helps release RbfA from mature subunits. May play a role in the assembly of ribosomal proteins into the subunit. Circularly permuted GTPase that catalyzes slow GTP hydrolysis, GTPase activity is stimulated by the 30S ribosomal subunit. The chain is Small ribosomal subunit biogenesis GTPase RsgA from Halalkalibacterium halodurans (strain ATCC BAA-125 / DSM 18197 / FERM 7344 / JCM 9153 / C-125) (Bacillus halodurans).